Consider the following 437-residue polypeptide: UDP-N-acetylmuramate--L-alanine ligase (437 aa).

Residue 108-114 coordinates ATP; it reads GAHGKTS.

This sequence belongs to the MurCDEF family.

It is found in the cytoplasm. The catalysed reaction is UDP-N-acetyl-alpha-D-muramate + L-alanine + ATP = UDP-N-acetyl-alpha-D-muramoyl-L-alanine + ADP + phosphate + H(+). It functions in the pathway cell wall biogenesis; peptidoglycan biosynthesis. Its function is as follows. Cell wall formation. The protein is UDP-N-acetylmuramate--L-alanine ligase of Staphylococcus epidermidis (strain ATCC 12228 / FDA PCI 1200).